A 405-amino-acid polypeptide reads, in one-letter code: ATP phosphoribosyltransferase regulatory subunit (405 aa).

The protein belongs to the class-II aminoacyl-tRNA synthetase family. HisZ subfamily. Heteromultimer composed of HisG and HisZ subunits.

The protein localises to the cytoplasm. The protein operates within amino-acid biosynthesis; L-histidine biosynthesis; L-histidine from 5-phospho-alpha-D-ribose 1-diphosphate: step 1/9. Its function is as follows. Required for the first step of histidine biosynthesis. May allow the feedback regulation of ATP phosphoribosyltransferase activity by histidine. This is ATP phosphoribosyltransferase regulatory subunit from Microcystis aeruginosa (strain NIES-843 / IAM M-2473).